Here is a 335-residue protein sequence, read N- to C-terminus: MNFKKLPKIELHCHLDGSLRVDTILDIAKKDNIPLPSYNKKELINYVSIMDDCNSLDEYLNKFFIPNKVMQTKENLKRIAFELLEDVAADNVKYIEVRFAPLLHVEKGLNIEEIIESVLEGIKEAEKLYDIKGNLILGCMRNMDIPSAFEVVKKGAKFIGKGVVAIDLCAGEEPHFPGKYIEVLKLAKECGYRITIHAGEAGVGENVLEAINLLNAERIGHGIYIKDCAEAYKLVKEKNIPLEVCPTSNLHTKAFESYETHPFMDFLKDGIKVTINTDNMTVSNTTITKELEMLNKFCGLSIGDYKILYLNAVEASFASSETKKMLKSYVKEITG.

Zn(2+)-binding residues include histidine 12 and histidine 14. The substrate site is built by histidine 14 and aspartate 16. Position 197 (histidine 197) interacts with Zn(2+). The Proton donor role is filled by glutamate 200. Aspartate 278 contacts Zn(2+).

This sequence belongs to the metallo-dependent hydrolases superfamily. Adenosine and AMP deaminases family. Adenosine deaminase subfamily. It depends on Zn(2+) as a cofactor.

It catalyses the reaction adenosine + H2O + H(+) = inosine + NH4(+). It carries out the reaction 2'-deoxyadenosine + H2O + H(+) = 2'-deoxyinosine + NH4(+). Catalyzes the hydrolytic deamination of adenosine and 2-deoxyadenosine. This chain is Adenosine deaminase, found in Clostridium botulinum (strain Langeland / NCTC 10281 / Type F).